The primary structure comprises 238 residues: Ribonuclease PH (238 aa).

Phosphate-binding positions include Arg86 and 124 to 126 (GTR).

This sequence belongs to the RNase PH family. As to quaternary structure, homohexameric ring arranged as a trimer of dimers.

It carries out the reaction tRNA(n+1) + phosphate = tRNA(n) + a ribonucleoside 5'-diphosphate. Its function is as follows. Phosphorolytic 3'-5' exoribonuclease that plays an important role in tRNA 3'-end maturation. Removes nucleotide residues following the 3'-CCA terminus of tRNAs; can also add nucleotides to the ends of RNA molecules by using nucleoside diphosphates as substrates, but this may not be physiologically important. Probably plays a role in initiation of 16S rRNA degradation (leading to ribosome degradation) during starvation. The polypeptide is Ribonuclease PH (Edwardsiella ictaluri (strain 93-146)).